The chain runs to 1240 residues: DNA excision repair protein ERCC-6-like (1240 aa).

Ser-14 carries the post-translational modification Phosphoserine. The TPR 1 repeat unit spans residues Tyr-21 to Lys-54. The Helicase ATP-binding domain occupies Ser-110–Gly-278. Asp-123–Thr-130 lines the ATP pocket. Residues Asp-229–His-232 carry the DEAH box motif. In terms of domain architecture, Helicase C-terminal spans Phe-467–Phe-631. The tract at residues Phe-736 to Lys-760 is disordered. Polar residues predominate over residues Asn-748 to Lys-760. A phosphoserine mark is found at Ser-755 and Ser-773. The interval Asp-778–Ala-813 is disordered. The segment covering Thr-795–Ala-809 has biased composition (polar residues). Ser-821 carries the post-translational modification Phosphoserine. Residues Gln-845–Pro-879 are disordered. Phosphoserine is present on residues Ser-966, Ser-998, Ser-1001, and Ser-1021. A disordered region spans residues Lys-974 to Arg-1085. The segment covering Leu-978–Ser-998 has biased composition (polar residues). Over residues Ser-1049–Ser-1065 the composition is skewed to polar residues. Thr-1057 carries the post-translational modification Phosphothreonine. Phosphoserine occurs at positions 1092 and 1112. Acidic residues predominate over residues Met-1104 to Glu-1117. The tract at residues Met-1104 to Val-1185 is disordered. Residues Glu-1135 to Pro-1165 show a composition bias toward polar residues. Ser-1172 carries the post-translational modification Phosphoserine. Residues Tyr-1191–Asp-1224 form a TPR 2 repeat.

This sequence belongs to the SNF2/RAD54 helicase family. In terms of assembly, interacts with PLK1, which phosphorylates it. Both proteins are mutually dependent on each other for correct subcellular localization. Interacts (via N-terminal TPR repeat) with BEND3 (via BEN domains 1 and 3); the interaction is direct. In terms of processing, phosphorylation by PLK1 prevents the association with chromosome arms and restricts its localization to the kinetochore-centromere region. As to expression, expressed mainly in the neural tube and heart of 10.5 dpc embryo. Significantly down-regulated after alcohol exposure in embryonic brain and heart, but not in embryonic kidney, liver, or lung.

The protein localises to the chromosome. It localises to the centromere. It is found in the kinetochore. It carries out the reaction ATP + H2O = ADP + phosphate + H(+). Its function is as follows. DNA helicase that acts as a tension sensor that associates with catenated DNA which is stretched under tension until it is resolved during anaphase. Functions as ATP-dependent DNA translocase. Can promote Holliday junction branch migration (in vitro). This Mus musculus (Mouse) protein is DNA excision repair protein ERCC-6-like (Ercc6l).